A 226-amino-acid polypeptide reads, in one-letter code: Thioredoxin domain-containing protein 9 (226 aa).

The region spanning 74-180 is the Thioredoxin domain; it reads REIPSERDFF…TTETLEWRLG (107 aa). 3 positions are modified to phosphoserine: Ser188, Ser221, and Ser223.

Forms ternary complexes with the chaperonin TCP1 complex, spanning the cylindrical chaperonin cavity and contacting at least 2 subunits.

The protein localises to the cytoplasm. It is found in the nucleus. It localises to the cytoskeleton. Its subcellular location is the microtubule organizing center. The protein resides in the centrosome. The protein localises to the midbody. In terms of biological role, significantly diminishes the chaperonin TCP1 complex ATPase activity, thus negatively impacts protein folding, including that of actin or tubulin. The polypeptide is Thioredoxin domain-containing protein 9 (TXNDC9) (Homo sapiens (Human)).